Reading from the N-terminus, the 612-residue chain is uncharacterized protein (612 aa).

5 disordered regions span residues 46-113 (QQPQ…MVTP), 129-185 (QQYQ…TPTY), 313-360 (TKDG…GSTM), 457-488 (FSIS…SGYG), and 593-612 (NNTN…VVTI). A compositionally biased stretch (low complexity) spans 58 to 102 (HQQIPISTQSTPNSTSSTTTTTTTTTSTTTAPTSNSKKSKTTPSN). Composition is skewed to polar residues over residues 103-113 (GNKPTSGMVTP) and 129-138 (QQYQPNSQLQ). Residues 143–169 (IIKKSSLSTTPNNINNNNNNNNNTNTI) are compositionally biased toward low complexity. Over residues 175–185 (GGNNSAPTPTY) the composition is skewed to polar residues. Residues 323-359 (TTSSTSTSSSATSTTSSSTSSTTTTSSTSNSSTPGST) are compositionally biased toward low complexity.

This is an uncharacterized protein from Dictyostelium discoideum (Social amoeba).